The following is a 41-amino-acid chain: Large ribosomal subunit protein bL36 (41 aa).

Belongs to the bacterial ribosomal protein bL36 family.

In Chelativorans sp. (strain BNC1), this protein is Large ribosomal subunit protein bL36.